The sequence spans 299 residues: Coenzyme PQQ synthesis protein B (299 aa).

It belongs to the PqqB family.

It participates in cofactor biosynthesis; pyrroloquinoline quinone biosynthesis. May be involved in the transport of PQQ or its precursor to the periplasm. The chain is Coenzyme PQQ synthesis protein B from Methylobacterium sp. (strain 4-46).